The chain runs to 1033 residues: E3 ubiquitin-protein ligase Topors (1033 aa).

Residues 1–10 (MGSQPPPPGS) are compositionally biased toward pro residues. The tract at residues 1-36 (MGSQPPPPGSPLSREEGEAPPLVPAEEGRRRSRRVR) is disordered. Residues 52–376 (ELASNGPAVP…MAAFDQHANY (325 aa)) are required for DNA-binding. Residues Lys-74, Lys-77, Lys-84, and Lys-89 each participate in a glycyl lysine isopeptide (Lys-Gly) (interchain with G-Cter in SUMO2) cross-link. Residue Ser-99 is modified to Phosphoserine. An RING-type zinc finger spans residues 104-143 (CPICLDRFDNVSYLDRCLHKFCFRCVQEWSKNKAECPLCK). A Glycyl lysine isopeptide (Lys-Gly) (interchain with G-Cter in SUMO2) cross-link involves residue Lys-160. A Phosphoserine modification is found at Ser-196. A Glycyl lysine isopeptide (Lys-Gly) (interchain with G-Cter in SUMO2) cross-link involves residue Lys-251. 2 disordered regions span residues 414–477 (QAPW…SSSD) and 496–692 (VELS…RYYL). Low complexity predominate over residues 434-444 (VGVSSLLNSSD). The sumoylation and localization to discrete nuclear foci stretch occupies residues 438–574 (SLLNSSDSSD…RSTSLPAPRD (137 aa)). Residues 438–654 (SLLNSSDSSD…RSRTRDSSWS (217 aa)) are interaction with SUMO1. Positions 455–464 (TTSQIQGVQT) are enriched in polar residues. The tract at residues 457–731 (SQIQGVQTND…RRTLSRAHYS (275 aa)) is interaction with p53/TP53. The interval 457 to 879 (SQIQGVQTND…GKATDTSKHH (423 aa)) is interaction with TOP1. Over residues 465-477 (NDDVNNDSDSSSD) the composition is skewed to low complexity. Ser-500 is subject to Phosphoserine. A compositionally biased stretch (basic and acidic residues) spans 507-518 (PYEKVETVKTQE). Positions 522–535 (SYSSGDSDVSRASS) are enriched in low complexity. The segment covering 540–566 (LGKDEQMSKSHCDSDTRISSKKEEKRS) has biased composition (basic and acidic residues). Lys-561 is covalently cross-linked (Glycyl lysine isopeptide (Lys-Gly) (interchain with G-Cter in SUMO)). Ser-585 is modified (phosphoserine). Composition is skewed to basic residues over residues 613 to 629 (RNHR…KRSR) and 637 to 647 (PRARKDKKRSR). Positions 654–669 (SRRSQTLSLSSGSTSR) are enriched in low complexity. Lys-701 is covalently cross-linked (Glycyl lysine isopeptide (Lys-Gly) (interchain with G-Cter in SUMO2)). 2 disordered regions span residues 713–934 (RDGY…PIQD) and 970–1033 (TVEN…CDVS). Residue Ser-718 is modified to Phosphoserine; by PLK1. Basic residues predominate over residues 721–730 (RRRTLSRAHY). Residues 731-747 (SRQSSSPEFRIQSFSER) are compositionally biased toward polar residues. Ser-734 is modified (phosphoserine). Over residues 770–780 (SVSSNRSRTTS) the composition is skewed to low complexity. Over residues 815-837 (FTSKGKDSHYQKSKLDGSYKNES) the composition is skewed to basic and acidic residues. Residues Lys-818 and Lys-834 each participate in a glycyl lysine isopeptide (Lys-Gly) (interchain with G-Cter in SUMO2) cross-link. Over residues 851–860 (KHKRRRRRTR) the composition is skewed to basic residues. The interval 851-914 (KHKRRRRRTR…ITIDSDSDGE (64 aa)) is interaction with UBE2I. Phosphoserine is present on residues Ser-861 and Ser-863. Over residues 877-894 (KHHKKKKKKHKKKHKKHH) the composition is skewed to basic residues. Ser-909, Ser-911, Ser-999, Ser-1016, and Ser-1025 each carry phosphoserine. Positions 992–1008 (TFASDLESQSSNVSIQA) are enriched in polar residues.

In terms of assembly, interacts with TOP1. Interacts with the SUMO1 conjugating enzyme UBE2I. Interacts with SUMO1. Interacts with NKX3-1; polyubiquitinates NKX3-1 and induces its proteasomal degradation. Interacts with SIN3A; sumoylates SIN3A. Interacts with IKBKE; induced by DNA damage. Interacts with p53/TP53. Interacts with PARK7/DJ-1. In terms of processing, phosphorylation at Ser-99 regulates the E3 ubiquitin-protein ligase activity but not the SUMO1-protein ligase activity. Phosphorylation at Ser-718 increases the E3 ubiquitin-protein ligase activity versus the E3 SUMO1-protein ligase activity resulting in increased p53/TP53 ubiquitination and degradation. Sumoylated.

The protein resides in the nucleus. It localises to the PML body. It catalyses the reaction S-ubiquitinyl-[E2 ubiquitin-conjugating enzyme]-L-cysteine + [acceptor protein]-L-lysine = [E2 ubiquitin-conjugating enzyme]-L-cysteine + N(6)-ubiquitinyl-[acceptor protein]-L-lysine.. Functions as an E3 ubiquitin-protein ligase and as a E3 SUMO1-protein ligase. Probable tumor suppressor involved in cell growth, cell proliferation and apoptosis that regulates p53/TP53 stability through ubiquitin-dependent degradation. May regulate chromatin modification through sumoylation of several chromatin modification-associated proteins. May be involved in DNA-damage-induced cell death through IKBKE sumoylation. The polypeptide is E3 ubiquitin-protein ligase Topors (Topors) (Mus musculus (Mouse)).